Here is an 876-residue protein sequence, read N- to C-terminus: Alanine--tRNA ligase (876 aa).

Residue K74 is modified to N6-acetyllysine. Positions 564, 568, 666, and 670 each coordinate Zn(2+).

The protein belongs to the class-II aminoacyl-tRNA synthetase family. In terms of assembly, homotetramer. The cofactor is Zn(2+).

The protein localises to the cytoplasm. The catalysed reaction is tRNA(Ala) + L-alanine + ATP = L-alanyl-tRNA(Ala) + AMP + diphosphate. Its function is as follows. Catalyzes the attachment of alanine to tRNA(Ala) in a two-step reaction: alanine is first activated by ATP to form Ala-AMP and then transferred to the acceptor end of tRNA(Ala). Also edits incorrectly charged Ser-tRNA(Ala) and Gly-tRNA(Ala) via its editing domain. This chain is Alanine--tRNA ligase, found in Escherichia coli O157:H7.